Here is a 346-residue protein sequence, read N- to C-terminus: Tetraacyldisaccharide 4'-kinase (346 aa).

An ATP-binding site is contributed by 54 to 61; it reads TVGGAGKT.

It belongs to the LpxK family.

It catalyses the reaction a lipid A disaccharide + ATP = a lipid IVA + ADP + H(+). The protein operates within glycolipid biosynthesis; lipid IV(A) biosynthesis; lipid IV(A) from (3R)-3-hydroxytetradecanoyl-[acyl-carrier-protein] and UDP-N-acetyl-alpha-D-glucosamine: step 6/6. In terms of biological role, transfers the gamma-phosphate of ATP to the 4'-position of a tetraacyldisaccharide 1-phosphate intermediate (termed DS-1-P) to form tetraacyldisaccharide 1,4'-bis-phosphate (lipid IVA). In Rhizobium etli (strain ATCC 51251 / DSM 11541 / JCM 21823 / NBRC 15573 / CFN 42), this protein is Tetraacyldisaccharide 4'-kinase.